The sequence spans 336 residues: Phosphatidylglycerol--prolipoprotein diacylglyceryl transferase (336 aa).

Helical transmembrane passes span 16 to 36 (IGPV…VLAV), 53 to 73 (ILDI…IYHI), and 93 to 113 (IWNG…AAWA). R141 contributes to the a 1,2-diacyl-sn-glycero-3-phospho-(1'-sn-glycerol) binding site. The next 3 membrane-spanning stretches (helical) occupy residues 190-210 (PTFL…VFLG), 220-240 (GSLF…IEAL), and 253-273 (INVW…IVIQ).

This sequence belongs to the Lgt family.

The protein localises to the cell membrane. It carries out the reaction L-cysteinyl-[prolipoprotein] + a 1,2-diacyl-sn-glycero-3-phospho-(1'-sn-glycerol) = an S-1,2-diacyl-sn-glyceryl-L-cysteinyl-[prolipoprotein] + sn-glycerol 1-phosphate + H(+). It participates in protein modification; lipoprotein biosynthesis (diacylglyceryl transfer). Its function is as follows. Catalyzes the transfer of the diacylglyceryl group from phosphatidylglycerol to the sulfhydryl group of the N-terminal cysteine of a prolipoprotein, the first step in the formation of mature lipoproteins. This chain is Phosphatidylglycerol--prolipoprotein diacylglyceryl transferase, found in Bifidobacterium adolescentis (strain ATCC 15703 / DSM 20083 / NCTC 11814 / E194a).